The primary structure comprises 89 residues: Protein S100-A6 (89 aa).

EF-hand domains lie at 12–47 (LVAI…IGAK) and 48–83 (LQDA…LALI). Positions 28 and 33 each coordinate Ca(2+). The residue at position 40 (Lys40) is an N6-acetyllysine. Position 47 is an N6-acetyllysine; alternate (Lys47). Lys47 bears the N6-succinyllysine; alternate mark. Residues Asp61, Asn63, Asp65, Glu67, and Glu72 each coordinate Ca(2+).

This sequence belongs to the S-100 family. As to quaternary structure, homodimer; head to tail assembly of 2 subunits. Interacts with CACYBP in a calcium-dependent manner. Interacts with ANXA2 and ANXA11 (via N-terminus). Interacts with SUGT1. Interacts with TP53; has higher affinity for TP53 that is phosphorylated on its N-terminal domain, and lower affinity for TP53 that is phosphorylated on its C-terminal domain. Interacts with tropomyosin. Interacts with FKBP4. Interacts with PPP5C (via TPR repeats); the interaction is calcium-dependent and modulates PPP5C activity. Interacts with TPPP; this interaction inhibits TPPP dimerization.

It localises to the nucleus envelope. The protein resides in the cytoplasm. It is found in the cell membrane. May function as calcium sensor and modulator, contributing to cellular calcium signaling. May function by interacting with other proteins, such as TPR-containing proteins, and indirectly play a role in many physiological processes such as the reorganization of the actin cytoskeleton and in cell motility. Binds 2 calcium ions. Calcium binding is cooperative. This chain is Protein S100-A6 (S100a6), found in Rattus norvegicus (Rat).